The sequence spans 323 residues: Fructose-1,6-bisphosphatase class 1 (323 aa).

Mg(2+)-binding residues include Glu90, Asp111, Leu113, and Asp114. Substrate is bound by residues 114 to 117, Tyr222, and Lys253; that span reads DGSS. Position 259 (Glu259) interacts with Mg(2+).

Belongs to the FBPase class 1 family. Homotetramer. The cofactor is Mg(2+).

The protein localises to the cytoplasm. It catalyses the reaction beta-D-fructose 1,6-bisphosphate + H2O = beta-D-fructose 6-phosphate + phosphate. It participates in carbohydrate biosynthesis; gluconeogenesis. The chain is Fructose-1,6-bisphosphatase class 1 from Pelobacter propionicus (strain DSM 2379 / NBRC 103807 / OttBd1).